Reading from the N-terminus, the 134-residue chain is Protein LctB (134 aa).

The protein is Protein LctB (lctB) of Bacillus caldotenax.